The chain runs to 144 residues: (R)-specific enoyl-CoA hydratase (144 aa).

The region spanning 13-128 (DIKEGQSASL…TFRTTCTVAG (116 aa)) is the MaoC-like domain.

Homotetramer.

The enzyme catalyses a (3R)-3-hydroxyacyl-CoA = a (2E)-enoyl-CoA + H2O. Catalyzes the hydration of trans-2-enoyl-CoAs with a chain-length of 4-6 carbon atoms, forming the corresponding (3R)-3-hydroxyacyl-CoAs, which can then be utilized for the production of polyhydroxyalkanoates (PHA) polymers. Cannot use trans-2,3-octenoyl-CoA as substrate. The protein is (R)-specific enoyl-CoA hydratase of Rhodospirillum rubrum (strain ATCC 11170 / ATH 1.1.1 / DSM 467 / LMG 4362 / NCIMB 8255 / S1).